The chain runs to 61 residues: Bacteriocin sakacin-P (61 aa).

A propeptide spanning residues 1-18 (MEKFIELSLKEVTAITGG) is cleaved from the precursor. Residues Cys27 and Cys32 are joined by a disulfide bond.

This sequence belongs to the bacteriocin class IIA/YGNGV family.

It localises to the secreted. Bactericidal activity; inhibits closely related Lactobacilli, Listeria monocytogenes and ivanovvi, Enterococcus faecalis, Carnobacterium sp and Brocothrix thermosphacta. This Latilactobacillus sakei (Lactobacillus sakei) protein is Bacteriocin sakacin-P (sakP).